The sequence spans 292 residues: Bifunctional protein FolD 1 (292 aa).

165–167 is an NADP(+) binding site; sequence GRS.

The protein belongs to the tetrahydrofolate dehydrogenase/cyclohydrolase family. As to quaternary structure, homodimer.

The enzyme catalyses (6R)-5,10-methylene-5,6,7,8-tetrahydrofolate + NADP(+) = (6R)-5,10-methenyltetrahydrofolate + NADPH. The catalysed reaction is (6R)-5,10-methenyltetrahydrofolate + H2O = (6R)-10-formyltetrahydrofolate + H(+). It functions in the pathway one-carbon metabolism; tetrahydrofolate interconversion. Its function is as follows. Catalyzes the oxidation of 5,10-methylenetetrahydrofolate to 5,10-methenyltetrahydrofolate and then the hydrolysis of 5,10-methenyltetrahydrofolate to 10-formyltetrahydrofolate. The sequence is that of Bifunctional protein FolD 1 from Myxococcus xanthus (strain DK1622).